A 196-amino-acid polypeptide reads, in one-letter code: Phosphoheptose isomerase (196 aa).

The 166-residue stretch at 31 to 196 (VARQFKAGNK…KAGLEAQIAV (166 aa)) folds into the SIS domain. Substrate is bound at residue 46 to 48 (NGG). The Zn(2+) site is built by H55 and E59. Substrate-binding positions include E59, 88–89 (ND), 114–116 (STS), S119, and Q166. 2 residues coordinate Zn(2+): Q166 and H174.

Belongs to the SIS family. GmhA subfamily. The cofactor is Zn(2+).

The protein resides in the cytoplasm. It carries out the reaction 2 D-sedoheptulose 7-phosphate = D-glycero-alpha-D-manno-heptose 7-phosphate + D-glycero-beta-D-manno-heptose 7-phosphate. The protein operates within carbohydrate biosynthesis; D-glycero-D-manno-heptose 7-phosphate biosynthesis; D-glycero-alpha-D-manno-heptose 7-phosphate and D-glycero-beta-D-manno-heptose 7-phosphate from sedoheptulose 7-phosphate: step 1/1. Its function is as follows. Catalyzes the isomerization of sedoheptulose 7-phosphate in D-glycero-D-manno-heptose 7-phosphate. In Crocosphaera subtropica (strain ATCC 51142 / BH68) (Cyanothece sp. (strain ATCC 51142)), this protein is Phosphoheptose isomerase.